Reading from the N-terminus, the 139-residue chain is Trafficking protein particle complex subunit 2-like protein (139 aa).

It belongs to the TRAPP small subunits family. Sedlin subfamily.

The protein localises to the cytoplasm. The protein resides in the perinuclear region. It is found in the endoplasmic reticulum. It localises to the golgi apparatus. Functionally, may play a role in vesicular transport from endoplasmic reticulum to Golgi. In Xenopus tropicalis (Western clawed frog), this protein is Trafficking protein particle complex subunit 2-like protein (trappc2l).